We begin with the raw amino-acid sequence, 157 residues long: MDPKSPEFIIDQPLKILGFVFDELSATRVSGHLTLTEKCCQPFKVLHGGVSALIAEALASLGAGIASGFKRVAGIHLSIHHLRPAALGEIVFAESFPVSVGKNIQVWEVRLWKAKKTETPDNKIMVSTSRVTLFCGLPIPDHVKDAPDELKKVISKL.

Glu-56 is a catalytic residue. The Microbody targeting signal motif lies at 154–156; sequence ISK.

It belongs to the 4-hydroxybenzoyl-CoA thioesterase family. DHNA-CoA hydrolase subfamily. In terms of assembly, homotetramers.

The protein localises to the peroxisome. The protein operates within cofactor biosynthesis; phylloquinone biosynthesis. Its pathway is quinol/quinone metabolism; 1,4-dihydroxy-2-naphthoate biosynthesis; 1,4-dihydroxy-2-naphthoate from chorismate: step 7/7. Functionally, catalyzes the hydrolysis of the thioester bond of 1,4-dihydroxy-2-naphthoyl-CoA (DHNA-CoA) in peroxisomes, a necessary step to form the naphthoquinone ring of phylloquinone (vitamin K(1)). Displayed also slight thioesterase activity towards benzoyl-CoA. Is not active on phenylacetyl-CoA, succinyl-CoA and palmitoyl-CoA thioesters. This chain is 1,4-dihydroxy-2-naphthoyl-CoA thioesterase 2, found in Arabidopsis thaliana (Mouse-ear cress).